The primary structure comprises 161 residues: Large ribosomal subunit protein uL15 (161 aa).

The segment covering 1-10 has biased composition (basic and acidic residues); it reads MKLNELRDNP. Residues 1–42 form a disordered region; that stretch reads MKLNELRDNPGARPKSKRLGRGIGSGKGKTSGKGVKGQKARE. Gly residues predominate over residues 21 to 35; that stretch reads RGIGSGKGKTSGKGV.

Belongs to the universal ribosomal protein uL15 family. In terms of assembly, part of the 50S ribosomal subunit.

In terms of biological role, binds to the 23S rRNA. The chain is Large ribosomal subunit protein uL15 from Acidiphilium cryptum (strain JF-5).